Consider the following 282-residue polypeptide: Phosphatidylserine decarboxylase proenzyme (282 aa).

Catalysis depends on charge relay system; for autoendoproteolytic cleavage activity residues aspartate 88, histidine 145, and serine 248. Residue serine 248 is the Schiff-base intermediate with substrate; via pyruvic acid; for decarboxylase activity of the active site. Serine 248 is subject to Pyruvic acid (Ser); by autocatalysis.

This sequence belongs to the phosphatidylserine decarboxylase family. PSD-B subfamily. Prokaryotic type I sub-subfamily. Heterodimer of a large membrane-associated beta subunit and a small pyruvoyl-containing alpha subunit. Pyruvate is required as a cofactor. Post-translationally, is synthesized initially as an inactive proenzyme. Formation of the active enzyme involves a self-maturation process in which the active site pyruvoyl group is generated from an internal serine residue via an autocatalytic post-translational modification. Two non-identical subunits are generated from the proenzyme in this reaction, and the pyruvate is formed at the N-terminus of the alpha chain, which is derived from the carboxyl end of the proenzyme. The autoendoproteolytic cleavage occurs by a canonical serine protease mechanism, in which the side chain hydroxyl group of the serine supplies its oxygen atom to form the C-terminus of the beta chain, while the remainder of the serine residue undergoes an oxidative deamination to produce ammonia and the pyruvoyl prosthetic group on the alpha chain. During this reaction, the Ser that is part of the protease active site of the proenzyme becomes the pyruvoyl prosthetic group, which constitutes an essential element of the active site of the mature decarboxylase.

The protein resides in the cell membrane. The enzyme catalyses a 1,2-diacyl-sn-glycero-3-phospho-L-serine + H(+) = a 1,2-diacyl-sn-glycero-3-phosphoethanolamine + CO2. It participates in phospholipid metabolism; phosphatidylethanolamine biosynthesis; phosphatidylethanolamine from CDP-diacylglycerol: step 2/2. Its function is as follows. Catalyzes the formation of phosphatidylethanolamine (PtdEtn) from phosphatidylserine (PtdSer). The chain is Phosphatidylserine decarboxylase proenzyme from Dechloromonas aromatica (strain RCB).